The following is a 435-amino-acid chain: Arginine biosynthesis bifunctional protein ArgJ, mitochondrial (435 aa).

Residues T179, K205, T216, E302, N430, and S435 each coordinate substrate. T216 serves as the catalytic Nucleophile.

It belongs to the ArgJ family. As to quaternary structure, heterodimer of an alpha and a beta chain. Post-translationally, the alpha and beta chains are autoproteolytically processed from a single precursor protein within the mitochondrion.

The protein localises to the mitochondrion matrix. The enzyme catalyses N(2)-acetyl-L-ornithine + L-glutamate = N-acetyl-L-glutamate + L-ornithine. It carries out the reaction L-glutamate + acetyl-CoA = N-acetyl-L-glutamate + CoA + H(+). Its pathway is amino-acid biosynthesis; L-arginine biosynthesis; L-ornithine and N-acetyl-L-glutamate from L-glutamate and N(2)-acetyl-L-ornithine (cyclic): step 1/1. The protein operates within amino-acid biosynthesis; L-arginine biosynthesis; N(2)-acetyl-L-ornithine from L-glutamate: step 1/4. Functionally, catalyzes two activities which are involved in the cyclic version of arginine biosynthesis: the synthesis of acetylglutamate from glutamate and acetyl-CoA, and of ornithine by transacetylation between acetylornithine and glutamate. The chain is Arginine biosynthesis bifunctional protein ArgJ, mitochondrial from Schizosaccharomyces japonicus (strain yFS275 / FY16936) (Fission yeast).